The following is a 311-amino-acid chain: Cytochrome f (311 aa).

Positions 1–27 (MKHFFKSLTLAIALAASVLFWSPQAQA) are cleaved as a signal peptide. 4 residues coordinate heme: tyrosine 28, cysteine 48, cysteine 51, and histidine 52. Residues 279 to 296 (WLLVFFAAITLSQILLVL) form a helical membrane-spanning segment.

This sequence belongs to the cytochrome f family. As to quaternary structure, the 4 large subunits of the cytochrome b6-f complex are cytochrome b6, subunit IV (17 kDa polypeptide, PetD), cytochrome f and the Rieske protein, while the 4 small subunits are PetG, PetL, PetM and PetN. The complex functions as a dimer. Heme is required as a cofactor.

The protein localises to the cellular thylakoid membrane. In terms of biological role, component of the cytochrome b6-f complex, which mediates electron transfer between photosystem II (PSII) and photosystem I (PSI), cyclic electron flow around PSI, and state transitions. This Synechococcus elongatus protein is Cytochrome f.